The following is a 430-amino-acid chain: N-lysine methyltransferase SMYD2-B (430 aa).

In terms of domain architecture, SET spans 5–239; it reads EGLERFDSPG…AGEEVFTSYI (235 aa). 15-17 is an S-adenosyl-L-methionine binding site; that stretch reads KGR. Cys50, Cys53, Cys63, Cys66, Cys72, Cys76, His84, and Cys88 together coordinate Zn(2+). An MYND-type zinc finger spans residues 50–88; sequence CDFCFTRKEGLSKCGKCKQAFYCNVDCQKGDWPMHKLEC. S-adenosyl-L-methionine contacts are provided by residues His135, 204–205, and 256–258; these read NH and YFF.

Belongs to the class V-like SAM-binding methyltransferase superfamily.

The protein localises to the cytoplasm. It localises to the cytosol. It is found in the nucleus. It carries out the reaction L-lysyl(4)-[histone H3] + 3 S-adenosyl-L-methionine = N(6),N(6),N(6)-trimethyl-L-lysyl(4)-[histone H3] + 3 S-adenosyl-L-homocysteine + 3 H(+). It catalyses the reaction L-lysyl-[protein] + S-adenosyl-L-methionine = N(6)-methyl-L-lysyl-[protein] + S-adenosyl-L-homocysteine + H(+). Protein-lysine N-methyltransferase that methylates both histones and non-histone proteins, including p53/TP53 and RB1. Specifically trimethylates histone H3 'Lys-4' (H3K4me3) in vivo. The activity requires interaction with HSP90alpha. Shows even higher methyltransferase activity on p53/TP53. Monomethylates 'Lys-370' of p53/TP53, leading to decreased DNA-binding activity and subsequent transcriptional regulation activity of p53/TP53. Monomethylates RB1 at 'Lys-860'. The polypeptide is N-lysine methyltransferase SMYD2-B (smyd2-b) (Xenopus laevis (African clawed frog)).